The following is a 1038-amino-acid chain: Isoleucine--tRNA ligase (1038 aa).

A 'HIGH' region motif is present at residues 48–58 (PTANGKPHVGH). The 'KMSKS' region motif lies at 590-594 (KMSKS). Lysine 593 contributes to the ATP binding site.

This sequence belongs to the class-I aminoacyl-tRNA synthetase family. IleS type 2 subfamily. As to quaternary structure, monomer. Zn(2+) is required as a cofactor.

It localises to the cytoplasm. It carries out the reaction tRNA(Ile) + L-isoleucine + ATP = L-isoleucyl-tRNA(Ile) + AMP + diphosphate. Catalyzes the attachment of isoleucine to tRNA(Ile). As IleRS can inadvertently accommodate and process structurally similar amino acids such as valine, to avoid such errors it has two additional distinct tRNA(Ile)-dependent editing activities. One activity is designated as 'pretransfer' editing and involves the hydrolysis of activated Val-AMP. The other activity is designated 'posttransfer' editing and involves deacylation of mischarged Val-tRNA(Ile). The sequence is that of Isoleucine--tRNA ligase from Clostridium novyi (strain NT).